Consider the following 944-residue polypeptide: Lactoferrin-binding protein A (944 aa).

Residues 1 to 27 form the signal peptide; the sequence is MNKKHGFSLTLTALAIAAAFPSYAANP. In terms of domain architecture, TBDR plug spans 52–178; that stretch reads RRSKEATGLG…LGGAVAFRTK (127 aa). Residues 189-944 enclose the TBDR beta-barrel domain; the sequence is SWGIQAKTAY…NFSLALEMKF (756 aa). Positions 927–944 match the TonB C-terminal box motif; sequence GRYAAPGRNFSLALEMKF.

The protein belongs to the TonB-dependent receptor family.

It localises to the cell outer membrane. In terms of biological role, unknown. May be an iron-siderophore receptor. The chain is Lactoferrin-binding protein A (lbpA) from Neisseria meningitidis serogroup A / serotype 4A (strain DSM 15465 / Z2491).